The following is a 1762-amino-acid chain: Lysine-specific demethylase 3B (1762 aa).

Ala2 carries the post-translational modification N-acetylalanine. 2 disordered regions span residues 253–350 (MDSS…FVPQ) and 426–468 (TTAS…NSSL). The segment covering 299 to 310 (ATKKLKGDRGEV) has biased composition (basic and acidic residues). A compositionally biased stretch (low complexity) spans 426–435 (TTASSTPTTV). The segment covering 453–465 (GSWSQASGENSRN) has biased composition (polar residues). A phosphoserine mark is found at Ser493, Ser547, Ser557, and Ser561. Residues 574 to 613 (SVLGADTQPGPKAGSSVDRKVPAESMPTLTPAFPRSLLNT) form a disordered region. Thr615 is subject to Phosphothreonine. Positions 713-746 (TGSPSLSAVGNGRSSSPTNSLTQPIEMPTLSSSP) are enriched in polar residues. The segment at 713–763 (TGSPSLSAVGNGRSSSPTNSLTQPIEMPTLSSSPTEERPTVGPGQQDNPLL) is disordered. Phosphoserine is present on residues Ser767, Ser774, and Ser779. Lys789 is covalently cross-linked (Glycyl lysine isopeptide (Lys-Gly) (interchain with G-Cter in SUMO2)). At Ser799 the chain carries Phosphoserine. The interval 806–853 (ACRQDSDSSTNSDLSDLSDSEEQLQAKSGLKGIPEHLMGKLGPNGERS) is disordered. The C6-type zinc finger occupies 1032–1057 (CDVCETTLFNIHWVCRKCGFGVCLDC). Positions 1146 to 1163 (QLPSVTPSASSGNETTFS) are enriched in polar residues. The disordered stretch occupies residues 1146–1217 (QLPSVTPSAS…AIRPPCPDTA (72 aa)). Phosphoserine is present on residues Ser1254 and Ser1260. The tract at residues 1285 to 1306 (SNSKTEGSSLRDLLHSGPGKLP) is disordered. Residues 1294 to 1298 (LRDLL) carry the LXXLL motif motif. One can recognise a JmjC domain in the interval 1499–1722 (MPTRFEDLME…HCFRLTQEFR (224 aa)). His1561, Asp1563, and His1690 together coordinate Fe cation.

The protein belongs to the JHDM2 histone demethylase family. Fe(2+) serves as cofactor.

The protein localises to the nucleus. The enzyme catalyses N(6),N(6)-dimethyl-L-lysyl(9)-[histone H3] + 2 2-oxoglutarate + 2 O2 = L-lysyl(9)-[histone H3] + 2 formaldehyde + 2 succinate + 2 CO2. Its function is as follows. Histone demethylase that specifically demethylates 'Lys-9' of histone H3, thereby playing a central role in histone code. Demethylation of Lys residue generates formaldehyde and succinate May have tumor suppressor activity. The polypeptide is Lysine-specific demethylase 3B (Kdm3b) (Mus musculus (Mouse)).